The chain runs to 143 residues: Ribonuclease P protein component 2 (143 aa).

The protein belongs to the eukaryotic/archaeal RNase P protein component 2 family. As to quaternary structure, consists of a catalytic RNA component and at least 4-5 protein subunits.

The protein localises to the cytoplasm. The catalysed reaction is Endonucleolytic cleavage of RNA, removing 5'-extranucleotides from tRNA precursor.. Part of ribonuclease P, a protein complex that generates mature tRNA molecules by cleaving their 5'-ends. The sequence is that of Ribonuclease P protein component 2 from Saccharolobus islandicus (strain L.S.2.15 / Lassen #1) (Sulfolobus islandicus).